A 461-amino-acid chain; its full sequence is UDP-glucosyltransferase 1 (461 aa).

It belongs to the UDP-glycosyltransferase family.

The protein operates within secondary metabolite biosynthesis. Functionally, UDP-glucosyltransferase; part of the pathway that mediates the biosynthesis of tenellin-type 2-pyridones, iron-chelating compounds involved in iron stress tolerance, competition with the natural competitor fungus Metarhizium robertsii and insect hosts infection. Targets the N-OH hydroxyl residue of 15-hydroxytellenin (15-HT) to produce pyridovericin-N-O-(beta-D-glucopyranoside) which is further methylated by the methyltransferase MT1 to yield pyridovericin-N-O-(4-O-methyl-beta-D-glucopyranoside) (PMGP). The pathway begins with the assembly of the polyketide-amino acid backbone by the hybrid PKS-NRPS tenS with the help of the enoyl reductase tenC. These enzymes catalyze the synthesis of the pyrrolidine-2-dione intermediates pretellinin A, 11-hydropretellenin A, 12-hydropretellenin A, 13-hydropretellenin A, 14-hydropretellenin A, 12-oxopretellenin A and prototellinin D. The cytochrome P450 monooxygenase tenA then catalyzes an oxidative ring expansion of pretenellin A and 14-hydropretellenin A to form the 2-pyridone core, leading to pretenellin B and pyridovericin, respectively. The cytochrome P450 monooxygenase tenB is then required for the selective N-hydroxylation of the 2-pyridone nitrogen of yield tellinin and 15-hydroxytellenin (15-HT), respectively. The UDP-glucosyltransferase GT1 and the methyltransferase MT1, located outside the tenS gene cluster, contribute to the stepwise glycosylation and methylation of 15-HT to obtain the glycoside pyridovericin-N-O-(4-O-methyl-beta-D-glucopyranoside) (PMGP). Additional related compounds such as 1-O-methyl-15-HT, (8Z)-1-O-methyl-15-HT, and O-methyltenellin A are also produced but the enzymes involved in their biosynthesis have still to be determined. In Beauveria bassiana (strain ARSEF 2860) (White muscardine disease fungus), this protein is UDP-glucosyltransferase 1.